Consider the following 350-residue polypeptide: Uroporphyrinogen decarboxylase (350 aa).

Residues 28–32 (RQAGR), Asp78, Tyr155, Ser210, and His325 contribute to the substrate site.

It belongs to the uroporphyrinogen decarboxylase family. In terms of assembly, homodimer.

The protein localises to the cytoplasm. The enzyme catalyses uroporphyrinogen III + 4 H(+) = coproporphyrinogen III + 4 CO2. It functions in the pathway porphyrin-containing compound metabolism; protoporphyrin-IX biosynthesis; coproporphyrinogen-III from 5-aminolevulinate: step 4/4. Catalyzes the decarboxylation of four acetate groups of uroporphyrinogen-III to yield coproporphyrinogen-III. The sequence is that of Uroporphyrinogen decarboxylase from Picosynechococcus sp. (strain ATCC 27264 / PCC 7002 / PR-6) (Agmenellum quadruplicatum).